Here is a 212-residue protein sequence, read N- to C-terminus: Pyridoxine/pyridoxamine 5'-phosphate oxidase (212 aa).

Substrate contacts are provided by residues 8-11 (RKNY) and Lys-66. FMN is bound by residues 61 to 66 (RIVLIK), 76 to 77 (FT), Arg-82, Lys-83, and Gln-105. Substrate-binding residues include Tyr-123, Arg-127, and Ser-131. Residues 140-141 (QS) and Trp-184 each bind FMN. 190–192 (RLH) is a substrate binding site. Residue Arg-194 participates in FMN binding.

Belongs to the pyridoxamine 5'-phosphate oxidase family. As to quaternary structure, homodimer. FMN serves as cofactor.

It catalyses the reaction pyridoxamine 5'-phosphate + O2 + H2O = pyridoxal 5'-phosphate + H2O2 + NH4(+). The catalysed reaction is pyridoxine 5'-phosphate + O2 = pyridoxal 5'-phosphate + H2O2. It functions in the pathway cofactor metabolism; pyridoxal 5'-phosphate salvage; pyridoxal 5'-phosphate from pyridoxamine 5'-phosphate: step 1/1. The protein operates within cofactor metabolism; pyridoxal 5'-phosphate salvage; pyridoxal 5'-phosphate from pyridoxine 5'-phosphate: step 1/1. Functionally, catalyzes the oxidation of either pyridoxine 5'-phosphate (PNP) or pyridoxamine 5'-phosphate (PMP) into pyridoxal 5'-phosphate (PLP). This is Pyridoxine/pyridoxamine 5'-phosphate oxidase from Paraburkholderia phymatum (strain DSM 17167 / CIP 108236 / LMG 21445 / STM815) (Burkholderia phymatum).